Consider the following 471-residue polypeptide: Exoglucanase 2 (471 aa).

A signal peptide spans 1-18; it reads MIVGILTTLATLATLAAS. The propeptide occupies 19-24; that stretch reads VPLEER. At glutamine 25 the chain carries Pyrrolidone carboxylic acid. The region spanning 26-62 is the CBM1 domain; that stretch reads ACSSVWGQCGGQNWSGPTCCASGSTCVYSNDYYSQCL. The segment covering 64 to 101 has biased composition (low complexity); the sequence is GAASSSSSTRAASTTSRVSPTTSRSSSATPPPGSTTTR. The tract at residues 64-108 is disordered; it reads GAASSSSSTRAASTTSRVSPTTSRSSSATPPPGSTTTRVPPVGSG. Positions 66–106 are linker; that stretch reads ASSSSSTRAASTTSRVSPTTSRSSSATPPPGSTTTRVPPVG. The catalytic stretch occupies residues 107-471; the sequence is SGTATYSGNP…LLTNANPSFL (365 aa). 2 O-linked (Man...) threonine glycosylation sites follow: threonine 111 and threonine 121. 4 O-linked (Man...) serine glycosylation sites follow: serine 130, serine 133, serine 134, and serine 139. Residue threonine 146 is glycosylated (O-linked (Man...) threonine). The cysteines at positions 200 and 259 are disulfide-linked. Residue aspartate 245 is the Proton donor of the active site. N-linked (GlcNAc) asparagine glycosylation is present at asparagine 313. N-linked (GlcNAc...) (high mannose) asparagine glycosylation is present at asparagine 334. The cysteines at positions 392 and 439 are disulfide-linked.

It belongs to the glycosyl hydrolase 6 (cellulase B) family. Post-translationally, asn-334 contains mainly a high-mannose-type glycan (Hex(7-9)GlcNAc(2)) in a 3:1 ration with a single GlcNAc. Asn-313 was primarily unglycosylated with a small fraction (18%) bearing a single GlcNAc at this site.

Its subcellular location is the secreted. The enzyme catalyses Hydrolysis of (1-&gt;4)-beta-D-glucosidic linkages in cellulose and cellotetraose, releasing cellobiose from the non-reducing ends of the chains.. Its function is as follows. Exocellobiohydrolases (CBH) that catalyzes the hydrolysis of 1,4-beta-D-glucosidic bonds in cellulose to release the disaccharide cellobiose. The degradation of cellulose involves an interplay between different cellulolytic enzymes. Hydrolysis starts with endoglucanases (EGs), which cut internal beta-1,4-glucosidic bonds in cellulose to reduce the polymerization degree of the substrate and create new chain ends for exocellobiohydrolases (CBHs). The CBHs release the disaccharide cellobiose from the non-reducing end of the cellulose polymer chain. Finally, beta-1,4-glucosidases hydrolyze the cellobiose and other short cello-oligosaccharides into glucose units. This Hypocrea jecorina (Trichoderma reesei) protein is Exoglucanase 2 (cbh2).